Reading from the N-terminus, the 63-residue chain is Jingdongin-1 (63 aa).

The signal sequence occupies residues 1-22 (MLTLKKSMLLLFFLGTINLSLC). The propeptide occupies 23 to 44 (EQERDADEEERRDDDEMDVEVE). Cys57 and Cys63 are joined by a disulfide.

Expressed by the skin glands.

Its subcellular location is the secreted. Its function is as follows. The synthetic peptide has antimicrobial activity against Gram-negative bacterium B.dysenteriae (MIC=35 ug/ml), against Gram-positive bacteria S.aureus ATCC 2592 (MIC=4.7 ug/ml) and B.subtilis ATCC 6633 (MIC=9.38 ug/ml) and against fungus C.albicans (MIC=18.75 ug/ml). Has no activity against Gram-negative bacterium E.coli ATCC 25922 but exhibits low hemolytic activity at concentrations up to 200 ug/ml. This Amolops jingdongensis (Chinese torrent frog) protein is Jingdongin-1.